The primary structure comprises 485 residues: Glutamate--tRNA ligase (485 aa).

The 'HIGH' region signature appears at 11–21; it reads PSPTGHLHIGN. Residues 252–256 carry the 'KMSKS' region motif; that stretch reads KLSKR. Lys-255 is an ATP binding site.

This sequence belongs to the class-I aminoacyl-tRNA synthetase family. Glutamate--tRNA ligase type 1 subfamily. In terms of assembly, monomer.

It is found in the cytoplasm. It catalyses the reaction tRNA(Glu) + L-glutamate + ATP = L-glutamyl-tRNA(Glu) + AMP + diphosphate. Its function is as follows. Catalyzes the attachment of glutamate to tRNA(Glu) in a two-step reaction: glutamate is first activated by ATP to form Glu-AMP and then transferred to the acceptor end of tRNA(Glu). The sequence is that of Glutamate--tRNA ligase from Bacillus cereus (strain ATCC 14579 / DSM 31 / CCUG 7414 / JCM 2152 / NBRC 15305 / NCIMB 9373 / NCTC 2599 / NRRL B-3711).